Consider the following 184-residue polypeptide: GTPase RhebL1 (184 aa).

Residues 16-21 (SVGKTS), 32-38 (LEGYDPT), G63, 119-122 (NKAD), and 149-150 (SA) contribute to the GTP site. Residues 35–43 (YDPTVENTY) carry the Effector region motif. Residue T38 participates in Mg(2+) binding. C181 carries the post-translational modification Cysteine methyl ester. C181 is lipidated: S-farnesyl cysteine. Residues 182–184 (YLM) constitute a propeptide, removed in mature form.

This sequence belongs to the small GTPase superfamily. Rheb family. Interacts with MTOR.

It is found in the endomembrane system. It localises to the cytoplasm. The enzyme catalyses GTP + H2O = GDP + phosphate + H(+). Its function is as follows. Binds GTP and exhibits intrinsic GTPase activity. May activate NF-kappa-B-mediated gene transcription. Promotes signal transduction through MTOR, activates RPS6KB1, and is a downstream target of the small GTPase-activating proteins TSC1 and TSC2. This chain is GTPase RhebL1 (Rhebl1), found in Mus musculus (Mouse).